The primary structure comprises 132 residues: Acyl carrier protein 3, chloroplastic (132 aa).

The N-terminal 49 residues, 1–49 (MASIAGSAVSFAKPVKAINTNSLSFSGARRGNAFLRLQPVPMRFAVCCS), are a transit peptide targeting the chloroplast. One can recognise a Carrier domain in the interval 52 to 127 (QDTVEKVCEI…DAATLIDKLV (76 aa)). Residue Ser87 is modified to O-(pantetheine 4'-phosphoryl)serine.

Belongs to the acyl carrier protein (ACP) family. Post-translationally, 4'-phosphopantetheine is transferred from CoA to a specific serine of apo-ACP by acpS. This modification is essential for activity because fatty acids are bound in thioester linkage to the sulfhydryl of the prosthetic group.

The protein resides in the plastid. It localises to the chloroplast. The protein operates within lipid metabolism; fatty acid biosynthesis. In terms of biological role, carrier of the growing fatty acid chain in fatty acid biosynthesis. In Hordeum vulgare (Barley), this protein is Acyl carrier protein 3, chloroplastic (ACL1.3).